A 478-amino-acid polypeptide reads, in one-letter code: MARTILRARRFFSLILPFFFISSVYAEQTSVPAKTVTVEAKNETFAPQHPDQYLSWKATSEQSTREDALAEDPRLVILWAGYPFSRDYNKPRGHAYAVTDVRETLRTGAPKNAEDGPLPMACWSCKSPDVARLIQKDGEDGYFHGKWARGGPEIVNALGCADCHNTASDDFAKGKPALTLSRPYAERAMETIGKPFDKASRFDQQSMVCGQCHVEYYFDGKNKAVKFPWDEGTKVEDMEKYYDAIAFSDWTNPLSKTPMLKAQHPEYETWSVGIHGKNNVTCIDCHMPKVQNAEGKLYTDHKIGNPFDNFAQTCANCHTQDKASLQKVVAERKQAIHDLKIKVEDQLVHAHFEAKAAWDAGATEAEMKPILDDIRHAQWRWDLAIASHGIHMHAPDEGLRMLGGAMDKAADARTKLVRLLGSKGITHEIPLPDISTKEKAQKAIGLNMQQINAEKQDFIKTVIPQWEDQARKNGLLSQ.

A signal peptide spans 1-26 (MARTILRARRFFSLILPFFFISSVYA). His-94 serves as a coordination point for heme c. Residues Cys-122, Cys-125, and Lys-126 each contribute to the heme site. Heme c contacts are provided by Cys-160, Cys-163, His-164, Cys-209, Cys-212, and His-213. Ca(2+) contacts are provided by Glu-215, Tyr-216, Lys-261, and Gln-263. Tyr-216 serves as a coordination point for substrate. His-264 serves as a coordination point for substrate. Heme c is bound by residues His-275, Cys-282, Cys-285, His-286, His-301, Cys-314, Cys-317, His-318, and His-393.

It belongs to the cytochrome c-552 family. Ca(2+) is required as a cofactor. Requires heme c as cofactor.

The protein resides in the periplasm. The catalysed reaction is 6 Fe(III)-[cytochrome c] + NH4(+) + 2 H2O = 6 Fe(II)-[cytochrome c] + nitrite + 8 H(+). Its pathway is nitrogen metabolism; nitrate reduction (assimilation). Functionally, catalyzes the reduction of nitrite to ammonia, consuming six electrons in the process. The polypeptide is Cytochrome c-552 (Citrobacter koseri (strain ATCC BAA-895 / CDC 4225-83 / SGSC4696)).